Here is a 152-residue protein sequence, read N- to C-terminus: UPF0311 protein blr7842 (152 aa).

Belongs to the UPF0311 family.

The polypeptide is UPF0311 protein blr7842 (Bradyrhizobium diazoefficiens (strain JCM 10833 / BCRC 13528 / IAM 13628 / NBRC 14792 / USDA 110)).